The following is a 503-amino-acid chain: MADGIEIGFGPLEQSGQGPGGSGDLVVFVGDDLSLGSAAREALGASGADLVARAAASEKFKGRSLSALSLPAPAGVGADRLVVVGLGSEKDRAKTDWPALGGFTASKVAGRTARVVLDWPGTTVTAAQAGEFALGARLRTYAFDRYKTKKKPDADDKSVTALTLLLADHGAAAREGEGARSLSDGVILARDLVNEPPNVLFPAEFARRASELAKLGVEIEVLEPARMRELGMGALLAVAQGSAREPRIVIMRWNGGPAAEAPVALIGKGVVFDSGGVSIKPGGGMEDMKGDMGGAAAVVGALHALAARKARCNVVGAIGIVENMPDGGAYRPSDILTSMSGQTIEVINTDAEGRLVLADVITHVIRSTKPKAIVDLATLTGAIIVALGQDIAGMFSNDDTLASNIHAAGEATGEKVWRMPLIPAYDKAIDSKFADMKNTGGRHGGAATAASFIKRYVEDVPWAHLDIAGVAMSSNASEINRSWGAGWGVRLLDRLIRDHYEAR.

Mn(2+)-binding residues include lysine 268 and aspartate 273. Lysine 280 is an active-site residue. Residues aspartate 291, aspartate 350, and glutamate 352 each coordinate Mn(2+). The active site involves arginine 354.

It belongs to the peptidase M17 family. It depends on Mn(2+) as a cofactor.

Its subcellular location is the cytoplasm. The catalysed reaction is Release of an N-terminal amino acid, Xaa-|-Yaa-, in which Xaa is preferably Leu, but may be other amino acids including Pro although not Arg or Lys, and Yaa may be Pro. Amino acid amides and methyl esters are also readily hydrolyzed, but rates on arylamides are exceedingly low.. The enzyme catalyses Release of an N-terminal amino acid, preferentially leucine, but not glutamic or aspartic acids.. Presumably involved in the processing and regular turnover of intracellular proteins. Catalyzes the removal of unsubstituted N-terminal amino acids from various peptides. This chain is Probable cytosol aminopeptidase, found in Methylobacterium radiotolerans (strain ATCC 27329 / DSM 1819 / JCM 2831 / NBRC 15690 / NCIMB 10815 / 0-1).